The sequence spans 350 residues: MTKITNDLFLKAARKEQVDRIPVWYMRQAGRSQPEYRKLKEKYSLFEITHQPEICAYVTKLPVDQYGVDAAILYKDIMTPLPGMGVDVEIKSGIGPVIHNPIRTFQDVEKLTIFKPEIEVPYVLDTIKLLADDMLDVPLIGFAGAPFTLASYMIEGGPSKNYHQTKSFMYREPEVWAILMEKLGRMTANYLIAQINAGASAVQLFDSWVGALSRADYAQYIRPVIEMIVKEVKAVHPTTPIIMQAVGASHLLAEWETMPLDVVGVDWRETITTARQKVPTKAIQGNLDPSTLLAPEKCIAETERILQEGILEPGYIFNLGHGVFPEVPPEMLKKLTKYIHERSEILLKKG.

Substrate is bound by residues 27 to 31, Phe46, Asp76, Tyr152, Ser207, and His321; that span reads RQAGR.

It belongs to the uroporphyrinogen decarboxylase family. Homodimer.

It localises to the cytoplasm. The catalysed reaction is uroporphyrinogen III + 4 H(+) = coproporphyrinogen III + 4 CO2. It functions in the pathway porphyrin-containing compound metabolism; protoporphyrin-IX biosynthesis; coproporphyrinogen-III from 5-aminolevulinate: step 4/4. Catalyzes the decarboxylation of four acetate groups of uroporphyrinogen-III to yield coproporphyrinogen-III. The chain is Uroporphyrinogen decarboxylase from Listeria innocua serovar 6a (strain ATCC BAA-680 / CLIP 11262).